A 354-amino-acid polypeptide reads, in one-letter code: Protein NDH-DEPENDENT CYCLIC ELECTRON FLOW 5 (354 aa).

The N-terminal 49 residues, 1–49 (MALVHYMNVSRSTFPLSRSSKINLSSSFASLPLQFHKNIKRLESSVPPS), are a transit peptide targeting the chloroplast.

It is found in the plastid. Its subcellular location is the chloroplast thylakoid membrane. Functionally, required for both formation and activity of the chloroplast NAD(P)H dehydrogenase (NDH) complex of the photosynthetic electron transport chain. May function in assembly or stabilization of the NDH complex. This Arabidopsis thaliana (Mouse-ear cress) protein is Protein NDH-DEPENDENT CYCLIC ELECTRON FLOW 5.